An 82-amino-acid chain; its full sequence is Small ribosomal subunit protein eS17 (82 aa).

This sequence belongs to the eukaryotic ribosomal protein eS17 family.

The polypeptide is Small ribosomal subunit protein eS17 (Sulfolobus acidocaldarius (strain ATCC 33909 / DSM 639 / JCM 8929 / NBRC 15157 / NCIMB 11770)).